The following is a 7756-amino-acid chain: Linear gramicidin synthase subunit C (7756 aa).

Carrier domains lie at 977–1052 (EPRN…AALQ), 2042–2116 (APAT…ADSS), 3557–3632 (APRT…ASLL), 4621–4695 (APAT…TVTD), 6141–6216 (APRK…AGLL), and 7200–7274 (APET…GDSV). 6 positions are modified to O-(pantetheine 4'-phosphoryl)serine: Ser1012, Ser2077, Ser3592, Ser4656, Ser6176, and Ser7235.

Belongs to the ATP-dependent AMP-binding enzyme family. In terms of assembly, large multienzyme complex composed of 4 subunits; LgrA, LgrB, LgrC and LgrD. Pantetheine 4'-phosphate is required as a cofactor.

Its function is as follows. Activates the 7th to 12th amino acids (Val, D-Val, Trp, D-Leu, Xaa and D-Leu) in linear gramicidin and catalyzes the formation of the peptide bond between them. This enzyme is also responsible for the epimerization of the 8th (D-Val), the 10th (D-Leu) and 12th (D-Leu) amino acids. The 11th (Xaa) amino acid is Trp in linear gramicidin A; Phe in linear gramicidin B and Tyr in linear gramicidin C. This is Linear gramicidin synthase subunit C (lgrC) from Brevibacillus parabrevis.